The chain runs to 65 residues: MPQLDTSTWLTTILSMFLALFIIFQLKISKHNFYHNPELTTKVLKQNTPWETKWTKIYLPLLLPL.

A helical membrane pass occupies residues 8–24 (TWLTTILSMFLALFIIF). An N6-acetyllysine; alternate modification is found at Lys-53. Residue Lys-53 is modified to N6-succinyllysine; alternate. Lys-56 carries the N6-acetyllysine modification.

The protein belongs to the ATPase protein 8 family. As to quaternary structure, component of the ATP synthase complex composed at least of ATP5F1A/subunit alpha, ATP5F1B/subunit beta, ATP5MC1/subunit c (homooctomer), MT-ATP6/subunit a, MT-ATP8/subunit 8, ATP5ME/subunit e, ATP5MF/subunit f, ATP5MG/subunit g, ATP5MK/subunit k, ATP5MJ/subunit j, ATP5F1C/subunit gamma, ATP5F1D/subunit delta, ATP5F1E/subunit epsilon, ATP5PF/subunit F6, ATP5PB/subunit b, ATP5PD/subunit d, ATP5PO/subunit OSCP. ATP synthase complex consists of a soluble F(1) head domain (subunits alpha(3) and beta(3)) - the catalytic core - and a membrane F(0) domain - the membrane proton channel (subunits c, a, 8, e, f, g, k and j). These two domains are linked by a central stalk (subunits gamma, delta, and epsilon) rotating inside the F1 region and a stationary peripheral stalk (subunits F6, b, d, and OSCP). Interacts with PRICKLE3.

Its subcellular location is the mitochondrion membrane. Functionally, subunit 8, of the mitochondrial membrane ATP synthase complex (F(1)F(0) ATP synthase or Complex V) that produces ATP from ADP in the presence of a proton gradient across the membrane which is generated by electron transport complexes of the respiratory chain. ATP synthase complex consist of a soluble F(1) head domain - the catalytic core - and a membrane F(1) domain - the membrane proton channel. These two domains are linked by a central stalk rotating inside the F(1) region and a stationary peripheral stalk. During catalysis, ATP synthesis in the catalytic domain of F(1) is coupled via a rotary mechanism of the central stalk subunits to proton translocation. In vivo, can only synthesize ATP although its ATP hydrolase activity can be activated artificially in vitro. Part of the complex F(0) domain. This Capra ibex ibex (Alpine ibex) protein is ATP synthase F(0) complex subunit 8.